The primary structure comprises 265 residues: Transcription factor Spi-B-like (265 aa).

The TAD1 (Acidic) stretch occupies residues 1 to 31 (MLTLEASQLDGPHPSYMFSDSSFYDLDSCKP). The TAD2 stretch occupies residues 42-63 (AEPPTDPCAGWLELAEPGYEPF). Positions 127–160 (TPLSEDDDFPTDAPALEVSDSDSDENLSPGGSLD) are disordered. A DNA-binding region (ETS) is located at residues 169–252 (LRLYQFLLGL…VKKKLTYQFG (84 aa)).

This sequence belongs to the ETS family.

The protein resides in the nucleus. May act as a sequence specific transcriptional activator. This chain is Transcription factor Spi-B-like, found in Paleosuchus palpebrosus (Cuvier's smooth-fronted caiman).